The primary structure comprises 451 residues: AP-3 complex subunit mu (451 aa).

One can recognise an MHD domain in the interval 191-450 (NNEIYVDLVE…TSRAGDYIVR (260 aa)).

Belongs to the adaptor complexes medium subunit family. Adaptor protein complex 3 (AP-3) is a heterotetramer composed of 2 large adaptins (APL5 and APL6), a medium adaptin (APM3) and a small adaptin (APS3).

It localises to the golgi apparatus. Its subcellular location is the cytoplasmic vesicle membrane. Part of the AP-3 complex, an adaptor-related complex which is not clathrin-associated. The complex is associated with the Golgi region as well as more peripheral structures. It facilitates the budding of vesicles from the Golgi membrane and may be directly involved in trafficking to the vacuole. This is AP-3 complex subunit mu (APM3) from Eremothecium gossypii (strain ATCC 10895 / CBS 109.51 / FGSC 9923 / NRRL Y-1056) (Yeast).